The sequence spans 315 residues: 4-hydroxy-3-methylbut-2-enyl diphosphate reductase (315 aa).

Cys12 is a binding site for [4Fe-4S] cluster. The (2E)-4-hydroxy-3-methylbut-2-enyl diphosphate site is built by His43 and His81. The dimethylallyl diphosphate site is built by His43 and His81. 2 residues coordinate isopentenyl diphosphate: His43 and His81. Cys103 is a [4Fe-4S] cluster binding site. His131 contacts (2E)-4-hydroxy-3-methylbut-2-enyl diphosphate. A dimethylallyl diphosphate-binding site is contributed by His131. Residue His131 coordinates isopentenyl diphosphate. The Proton donor role is filled by Glu133. Position 170 (Thr170) interacts with (2E)-4-hydroxy-3-methylbut-2-enyl diphosphate. Cys198 is a [4Fe-4S] cluster binding site. (2E)-4-hydroxy-3-methylbut-2-enyl diphosphate-binding residues include Ser226, Asn228, and Ser271. Residues Ser226, Asn228, and Ser271 each contribute to the dimethylallyl diphosphate site. Positions 226, 228, and 271 each coordinate isopentenyl diphosphate.

It belongs to the IspH family. Requires [4Fe-4S] cluster as cofactor.

It catalyses the reaction isopentenyl diphosphate + 2 oxidized [2Fe-2S]-[ferredoxin] + H2O = (2E)-4-hydroxy-3-methylbut-2-enyl diphosphate + 2 reduced [2Fe-2S]-[ferredoxin] + 2 H(+). The catalysed reaction is dimethylallyl diphosphate + 2 oxidized [2Fe-2S]-[ferredoxin] + H2O = (2E)-4-hydroxy-3-methylbut-2-enyl diphosphate + 2 reduced [2Fe-2S]-[ferredoxin] + 2 H(+). Its pathway is isoprenoid biosynthesis; dimethylallyl diphosphate biosynthesis; dimethylallyl diphosphate from (2E)-4-hydroxy-3-methylbutenyl diphosphate: step 1/1. It participates in isoprenoid biosynthesis; isopentenyl diphosphate biosynthesis via DXP pathway; isopentenyl diphosphate from 1-deoxy-D-xylulose 5-phosphate: step 6/6. Catalyzes the conversion of 1-hydroxy-2-methyl-2-(E)-butenyl 4-diphosphate (HMBPP) into a mixture of isopentenyl diphosphate (IPP) and dimethylallyl diphosphate (DMAPP). Acts in the terminal step of the DOXP/MEP pathway for isoprenoid precursor biosynthesis. This Bacillus cytotoxicus (strain DSM 22905 / CIP 110041 / 391-98 / NVH 391-98) protein is 4-hydroxy-3-methylbut-2-enyl diphosphate reductase.